The sequence spans 273 residues: Homeobox protein HMX2 (273 aa).

Residues 1–154 (MGSKEDVGKG…TGAAKKKTRT (154 aa)) are disordered. Basic and acidic residues predominate over residues 114 to 123 (PDFKEEKERL). The homeobox DNA-binding region spans 149-208 (KKKTRTVFSRSQVYQLESTFDMKRYLSSSERACLASSLQLTETQVKTWFQNRRNKWKRQL).

This sequence belongs to the HMX homeobox family. In terms of tissue distribution, expressed in the developing CNS, including a specific expression in vestibular structures throughout inner ear development.

The protein resides in the nucleus. In terms of biological role, transcription factor involved in specification of neuronal cell types and which is required for inner ear and hypothalamus development. The polypeptide is Homeobox protein HMX2 (Hmx2) (Mus musculus (Mouse)).